The chain runs to 524 residues: GMP synthase [glutamine-hydrolyzing] (524 aa).

Residues 9–207 form the Glutamine amidotransferase type-1 domain; sequence RILILDFGSQ…VIHICQCIPN (199 aa). Cys-86 (nucleophile) is an active-site residue. Active-site residues include His-181 and Glu-183. A GMPS ATP-PPase domain is found at 208-399; it reads WTTKHIIEDS…LGLPADLIYR (192 aa). 235–241 contacts ATP; it reads SGGVDSA.

Homodimer.

The catalysed reaction is XMP + L-glutamine + ATP + H2O = GMP + L-glutamate + AMP + diphosphate + 2 H(+). It participates in purine metabolism; GMP biosynthesis; GMP from XMP (L-Gln route): step 1/1. Its function is as follows. Catalyzes the synthesis of GMP from XMP. The protein is GMP synthase [glutamine-hydrolyzing] of Coxiella burnetii (strain CbuK_Q154) (Coxiella burnetii (strain Q154)).